A 760-amino-acid chain; its full sequence is uncharacterized protein (760 aa).

Positions 1–23 (MVIKKGFFALSSCTLGLGLILTA) are cleaved as a signal peptide. Cysteine 24 is lipidated: N-palmitoyl cysteine. Cysteine 24 carries S-diacylglycerol cysteine lipidation. Disordered stretches follow at residues 220–262 (ANGK…NSDN) and 443–482 (YEIKAPTNSQNGNGTLLGSFTKSKSNGKEQSGQDEDNQTS). Polar residues-rich tracts occupy residues 222-257 (GKTTSTQTSPQPKNAVSSLQLKQAAEGTSTDNSQDA) and 448-472 (PTNSQNGNGTLLGSFTKSKSNGKEQ).

The protein belongs to the MG185/MG260 family.

It localises to the cell membrane. This is an uncharacterized protein from Mycoplasma pneumoniae (strain ATCC 29342 / M129 / Subtype 1) (Mycoplasmoides pneumoniae).